The sequence spans 76 residues: Tautomerase PptA (76 aa).

Residue Pro-2 is the Proton acceptor; via imino nitrogen of the active site.

Belongs to the 4-oxalocrotonate tautomerase family. PptA subfamily. As to quaternary structure, homodimer.

The protein resides in the cytoplasm. This is Tautomerase PptA from Pectobacterium carotovorum subsp. carotovorum (strain PC1).